The sequence spans 1381 residues: DNA-directed RNA polymerase subunit beta (1381 aa).

Belongs to the RNA polymerase beta chain family. As to quaternary structure, the RNAP catalytic core consists of 2 alpha, 1 beta, 1 beta' and 1 omega subunit. When a sigma factor is associated with the core the holoenzyme is formed, which can initiate transcription.

It catalyses the reaction RNA(n) + a ribonucleoside 5'-triphosphate = RNA(n+1) + diphosphate. Its function is as follows. DNA-dependent RNA polymerase catalyzes the transcription of DNA into RNA using the four ribonucleoside triphosphates as substrates. This chain is DNA-directed RNA polymerase subunit beta, found in Sulfurimonas denitrificans (strain ATCC 33889 / DSM 1251) (Thiomicrospira denitrificans (strain ATCC 33889 / DSM 1251)).